The chain runs to 315 residues: Acetyl-coenzyme A carboxylase carboxyl transferase subunit alpha (315 aa).

The CoA carboxyltransferase C-terminal domain occupies 32-289; that stretch reads EIDLLEASLE…KQAFVDQLEQ (258 aa).

The protein belongs to the AccA family. Acetyl-CoA carboxylase is a heterohexamer composed of biotin carboxyl carrier protein (AccB), biotin carboxylase (AccC) and two subunits each of ACCase subunit alpha (AccA) and ACCase subunit beta (AccD).

The protein resides in the cytoplasm. It carries out the reaction N(6)-carboxybiotinyl-L-lysyl-[protein] + acetyl-CoA = N(6)-biotinyl-L-lysyl-[protein] + malonyl-CoA. Its pathway is lipid metabolism; malonyl-CoA biosynthesis; malonyl-CoA from acetyl-CoA: step 1/1. Its function is as follows. Component of the acetyl coenzyme A carboxylase (ACC) complex. First, biotin carboxylase catalyzes the carboxylation of biotin on its carrier protein (BCCP) and then the CO(2) group is transferred by the carboxyltransferase to acetyl-CoA to form malonyl-CoA. This Staphylococcus haemolyticus (strain JCSC1435) protein is Acetyl-coenzyme A carboxylase carboxyl transferase subunit alpha.